The chain runs to 493 residues: Cardiolipin synthase 1 (493 aa).

2 helical membrane passes run 13-33 and 45-65; these read FTIILAIGFIINLVLAFIIIF and WAWLFVLFVLPLIGFILYLFF. 2 PLD phosphodiesterase domains span residues 228 to 255 and 406 to 433; these read MNNRNHRKIIVIDGQLGYVGGFNIGDEY and ENGFIHSKMCLIDDEIVSVGTANMDFRS. Residues His233, Lys235, Asp240, His411, Lys413, and Asp418 contribute to the active site.

Belongs to the phospholipase D family. Cardiolipin synthase subfamily.

It localises to the cell membrane. It carries out the reaction 2 a 1,2-diacyl-sn-glycero-3-phospho-(1'-sn-glycerol) = a cardiolipin + glycerol. Catalyzes the reversible phosphatidyl group transfer from one phosphatidylglycerol molecule to another to form cardiolipin (CL) (diphosphatidylglycerol) and glycerol. In Staphylococcus aureus (strain COL), this protein is Cardiolipin synthase 1 (cls1).